Here is a 325-residue protein sequence, read N- to C-terminus: Probable transcription factor At4g01260 (325 aa).

Positions 1-98 (MAPKQLKKIE…SMGEEDVKKK (98 aa)) are disordered. 2 stretches are compositionally biased toward low complexity: residues 23-32 (ASSGESATSG) and 49-69 (KPVVVSKPSGSKTTTKPESST). Basic and acidic residues predominate over residues 73 to 83 (RSFEKTDEMSK).

This sequence belongs to the GeBP family.

In Arabidopsis thaliana (Mouse-ear cress), this protein is Probable transcription factor At4g01260.